Reading from the N-terminus, the 288-residue chain is Elongation factor Ts (288 aa).

An involved in Mg(2+) ion dislocation from EF-Tu region spans residues 79–82 (TDFV).

It belongs to the EF-Ts family.

It is found in the cytoplasm. Associates with the EF-Tu.GDP complex and induces the exchange of GDP to GTP. It remains bound to the aminoacyl-tRNA.EF-Tu.GTP complex up to the GTP hydrolysis stage on the ribosome. The sequence is that of Elongation factor Ts from Ehrlichia ruminantium (strain Welgevonden).